A 476-amino-acid polypeptide reads, in one-letter code: ATP synthase subunit beta (476 aa).

161–168 (GGAGVGKT) contacts ATP.

This sequence belongs to the ATPase alpha/beta chains family. As to quaternary structure, F-type ATPases have 2 components, CF(1) - the catalytic core - and CF(0) - the membrane proton channel. CF(1) has five subunits: alpha(3), beta(3), gamma(1), delta(1), epsilon(1). CF(0) has three main subunits: a(1), b(2) and c(9-12). The alpha and beta chains form an alternating ring which encloses part of the gamma chain. CF(1) is attached to CF(0) by a central stalk formed by the gamma and epsilon chains, while a peripheral stalk is formed by the delta and b chains.

The protein localises to the cell membrane. The enzyme catalyses ATP + H2O + 4 H(+)(in) = ADP + phosphate + 5 H(+)(out). In terms of biological role, produces ATP from ADP in the presence of a proton gradient across the membrane. The catalytic sites are hosted primarily by the beta subunits. This is ATP synthase subunit beta from Mycolicibacterium gilvum (strain PYR-GCK) (Mycobacterium gilvum (strain PYR-GCK)).